Here is a 1833-residue protein sequence, read N- to C-terminus: Protein TIC 214 (1833 aa).

Helical transmembrane passes span 18-38 (IINS…FSIG), 67-87 (FIMG…HLAL), 90-110 (PHTI…WNNH), 127-147 (LSIQ…YFIL), 175-195 (VGWL…LVWI), and 218-238 (IFSI…PSPI). Positions 254–301 (EETNLEIEKTSETKETKQEEEGFTEEDPSPSLFSEEKEDPDKIDETEK) are disordered. Composition is skewed to basic and acidic residues over residues 259–273 (EIEK…KQEE) and 292–301 (DPDKIDETEK).

It belongs to the TIC214 family. As to quaternary structure, part of the Tic complex.

The protein localises to the plastid. The protein resides in the chloroplast inner membrane. In terms of biological role, involved in protein precursor import into chloroplasts. May be part of an intermediate translocation complex acting as a protein-conducting channel at the inner envelope. This Spinacia oleracea (Spinach) protein is Protein TIC 214.